Consider the following 447-residue polypeptide: Probable glycine dehydrogenase (decarboxylating) subunit 1 (447 aa).

This sequence belongs to the GcvP family. N-terminal subunit subfamily. As to quaternary structure, the glycine cleavage system is composed of four proteins: P, T, L and H. In this organism, the P 'protein' is a heterodimer of two subunits.

It carries out the reaction N(6)-[(R)-lipoyl]-L-lysyl-[glycine-cleavage complex H protein] + glycine + H(+) = N(6)-[(R)-S(8)-aminomethyldihydrolipoyl]-L-lysyl-[glycine-cleavage complex H protein] + CO2. The glycine cleavage system catalyzes the degradation of glycine. The P protein binds the alpha-amino group of glycine through its pyridoxal phosphate cofactor; CO(2) is released and the remaining methylamine moiety is then transferred to the lipoamide cofactor of the H protein. This is Probable glycine dehydrogenase (decarboxylating) subunit 1 from Bacillus anthracis (strain A0248).